Reading from the N-terminus, the 226-residue chain is 3-dehydroquinate dehydratase (226 aa).

3-dehydroquinate contacts are provided by residues 30–32 (EWR) and R62. The Proton donor/acceptor role is filled by H118. K143 acts as the Schiff-base intermediate with substrate in catalysis. 3-dehydroquinate contacts are provided by R186, S205, and Q209.

The protein belongs to the type-I 3-dehydroquinase family. Homodimer.

It catalyses the reaction 3-dehydroquinate = 3-dehydroshikimate + H2O. It functions in the pathway metabolic intermediate biosynthesis; chorismate biosynthesis; chorismate from D-erythrose 4-phosphate and phosphoenolpyruvate: step 3/7. In terms of biological role, involved in the third step of the chorismate pathway, which leads to the biosynthesis of aromatic amino acids. Catalyzes the cis-dehydration of 3-dehydroquinate (DHQ) and introduces the first double bond of the aromatic ring to yield 3-dehydroshikimate. The protein is 3-dehydroquinate dehydratase of Streptococcus equi subsp. zooepidemicus (strain H70).